We begin with the raw amino-acid sequence, 215 residues long: MASATLTAWIKMPSFLKKILKLRGRRQEDESRSRMLSDSSMLSCRVNQLTSEGTEAGSTTPSTLPKDQALLIEPKVRAKEKSQHRRPKIIDQVRRVESLGEQASQRQKHMLETLINKIYTGPLGEELVQTLYLRIWTMEETPESLKILQMREDIRDQVLKMKTERWLRTLIRGEKTKLKDFQKRYEEVHPYLMKEKVEQVIMEEAWSLAAHIVQE.

The tract at residues 12–34 (MPSFLKKILKLRGRRQEDESRSR) is disordered. Positions 15-22 (FLKKILKL) are involved in self-degradation and in host STAT1 degradation.

Belongs to the respirovirus protein C family. The different isoforms interact (via C-terminus) with unphosphorylated and phosphorylated human STAT1 (via N-terminus), favoring the formation of parallel STAT1 homodimers. The different isoforms do not interact with host STAT2. C protein interacts with L protein; this interaction has an inhibitory effect on viral transcription and replication. Y1 and Y2 proteins are produced not only by alternative initiation, but also by proteolytic cleavage of C'. Only alternative initiation is detected in vitro, whereas in vivo cleavage seems to be predominant.

It is found in the host cytoplasm. Functionally, the different products prevent the establishment of cellular antiviral state by blocking the interferon-alpha/beta (IFN-alpha/beta) and IFN-gamma signaling pathways. They inhibit IFN-alpha/beta induced tyrosine phosphorylation of STAT1 and STAT2. Blocking the IFN-alpha/beta pathway requires binding to STAT1 in the cytoplasm. They inhibit IFN-gamma induced serine phosphorylation of STAT1. Block the IFN-gamma pathway by binding to and stabilizing the parallel form of the STAT1 dimer, further inducing high-molecular-weight complex formation and inhibition of transcription by IFN-gamma. May also have a role in preventing the cell to enter apoptosis. Modulate regulation of viral transcription and replication. Overexpression inhibits the viral RNA polymerase. The absence of all C', C, Y1 and Y2 proteins leads to viral delayed growth. Plays an important role in virion particles release. Modulates virion shape. This chain is Protein C' (P/V/C), found in Sendai virus (strain Nagoya) (SeV).